The chain runs to 154 residues: Ribonuclease HI (154 aa).

An RNase H type-1 domain is found at 1 to 142 (MTKHVEIFTD…CDELARTAAE (142 aa)). Asp10, Glu48, Asp70, and Asp134 together coordinate Mg(2+).

The protein belongs to the RNase H family. Monomer. Mg(2+) is required as a cofactor.

It is found in the cytoplasm. It catalyses the reaction Endonucleolytic cleavage to 5'-phosphomonoester.. Endonuclease that specifically degrades the RNA of RNA-DNA hybrids. This chain is Ribonuclease HI, found in Vibrio parahaemolyticus serotype O3:K6 (strain RIMD 2210633).